Reading from the N-terminus, the 209-residue chain is Small ribosomal subunit protein uS4 (209 aa).

Positions 99–164 (TRLDNVVYRM…IPRVQELKEL (66 aa)) constitute an S4 RNA-binding domain.

It belongs to the universal ribosomal protein uS4 family. As to quaternary structure, part of the 30S ribosomal subunit. Contacts protein S5. The interaction surface between S4 and S5 is involved in control of translational fidelity.

Its function is as follows. One of the primary rRNA binding proteins, it binds directly to 16S rRNA where it nucleates assembly of the body of the 30S subunit. With S5 and S12 plays an important role in translational accuracy. This chain is Small ribosomal subunit protein uS4, found in Natranaerobius thermophilus (strain ATCC BAA-1301 / DSM 18059 / JW/NM-WN-LF).